Here is a 125-residue protein sequence, read N- to C-terminus: Ribonuclease P protein component (125 aa).

Belongs to the RnpA family. As to quaternary structure, consists of a catalytic RNA component (M1 or rnpB) and a protein subunit.

The catalysed reaction is Endonucleolytic cleavage of RNA, removing 5'-extranucleotides from tRNA precursor.. Functionally, RNaseP catalyzes the removal of the 5'-leader sequence from pre-tRNA to produce the mature 5'-terminus. It can also cleave other RNA substrates such as 4.5S RNA. The protein component plays an auxiliary but essential role in vivo by binding to the 5'-leader sequence and broadening the substrate specificity of the ribozyme. The chain is Ribonuclease P protein component from Rhodococcus jostii (strain RHA1).